The primary structure comprises 206 residues: Phosphoheptose isomerase (206 aa).

The region spanning 37 to 195 (LVDAFKAGKK…IEQKMDINNE (159 aa)) is the SIS domain. Position 52-54 (52-54 (NGG)) interacts with substrate. Residues histidine 61 and glutamate 65 each coordinate Zn(2+). Substrate-binding positions include glutamate 65, 93–94 (ND), 119–121 (STS), serine 124, and glutamine 172. Residues glutamine 172 and histidine 180 each contribute to the Zn(2+) site.

This sequence belongs to the SIS family. GmhA subfamily. Homotetramer. Requires Zn(2+) as cofactor.

Its subcellular location is the cytoplasm. The catalysed reaction is 2 D-sedoheptulose 7-phosphate = D-glycero-alpha-D-manno-heptose 7-phosphate + D-glycero-beta-D-manno-heptose 7-phosphate. The protein operates within carbohydrate biosynthesis; D-glycero-D-manno-heptose 7-phosphate biosynthesis; D-glycero-alpha-D-manno-heptose 7-phosphate and D-glycero-beta-D-manno-heptose 7-phosphate from sedoheptulose 7-phosphate: step 1/1. Functionally, catalyzes the isomerization of sedoheptulose 7-phosphate in D-glycero-D-manno-heptose 7-phosphate. This Hamiltonella defensa subsp. Acyrthosiphon pisum (strain 5AT) protein is Phosphoheptose isomerase.